The primary structure comprises 909 residues: MSRLSKDIDSAFQGVGTKSGLEIWCVYNKQLISIPKSSFGKFHSGNAYLVLRTFLRKIESPQYDIHYWLGIDANEVDSILASDKALDLDAALGCCTVQYREVQGQETEKFLSYFKPCIIPVEGKYSPKTGIAGETYQVTLLRCKGDHVVRVKEVPFLRSSLNHDDVFILDTASKVFLFAGCNSSTQEKAKAMEVVEYIKDNKHDGRCEVATIEDGKFSGDSDAGEFWSFFGGYAPIPKLSSSTTQEQTQTPCAELFWIDTKGNLHPTGTSSLDKDMLEKNKCYMLDCHSEVFVWMGRNTSLTERKTSISSSEEFLRKEGRSTTTSLVLLTEGLENARFRSFFNKWPQTVESSLYNEGREKVAALFKQKGYDVEELPDEEDDPLYTNCRDNLKVWRVDGDDVSLLSIPDQTKLFTGDCYLVQYKYTYKERTEHLLYVWIGCESIQQDRADAITNASAIVGTTKGESVLCHIYQGNEPSRFFPMFQSLVVFKGGLSRRYKVLLAEKEKIGEEYNENKASLFRVVGTSPRNMQAIQVNLVATSLNSSYSYILQYGASAFTWIGKLSSDSDHEVLDRMLYFLDTSCQPIYIREGNETDTFWNLLGGKSEYPKEKEMRKQIEEPHLFTCSCSSDVLKVKEIYNFVQDDLTTEDVFLLDCQSEVYVWIGSNSNIKSKEEALTLGLKFLEMDILEEGLTMRTPVYVVTEGHEPPFFTRFFEWVPEKANMHGNSFERKLASLKGKKTSTKRSSGSQYRSQSKDNASRDLQSRSVSSNGSERGVSPCSSEKLLSLSSAEDMTNSSNSTPVVKKLFSESLLVDPNDGVARQESSSKSDISKQKPRVGINSDLSSLESLAYSYEQLRVDSQKPVTDIDATRREAYLTEKEFEERFGMAKSEFYALPKWKQNKLKISLHLF.

6 Gelsolin-like repeats span residues 29–79 (KQLI…VDSI), 149–189 (VRVK…QEKA), 262–305 (GNLH…TERK), 391–448 (LKVW…QDRA), 529–569 (MQAI…SDHE), and 631–672 (LKVK…KSKE). 2 disordered regions span residues 733–781 (SLKG…CSSE) and 816–835 (DGVA…QKPR). Residues 752–762 (QSKDNASRDLQ) show a composition bias toward basic and acidic residues. Residue Ser780 is modified to Phosphoserine. The region spanning 844–909 (SLESLAYSYE…NKLKISLHLF (66 aa)) is the HP domain.

This sequence belongs to the villin/gelsolin family. Expressed in all tissues examined. Mainly detected in the vascular tissue and the pericycle of roots and in the vasculature of leaves. Not expressed in the root cap.

The protein resides in the cytoplasm. Its subcellular location is the cytoskeleton. In terms of biological role, binds actin and actin filament bundles in a Ca(2+)/calmodulin-insensitive manner, but is unable to sever, cap, and nucleate actin filament formation in vitro. Does not protect individual filaments from severing by VLN3 (AC O81645). In Arabidopsis thaliana (Mouse-ear cress), this protein is Villin-1.